The following is a 513-amino-acid chain: Zinc finger CCCH-type with G patch domain-containing protein (513 aa).

A C3H1-type zinc finger spans residues Pro-155 to Leu-178. The segment covering Asp-252 to Ser-261 has biased composition (acidic residues). The interval Asp-252–Leu-283 is disordered. Positions Glu-262–Asn-271 are enriched in low complexity. Positions Ser-272–Leu-283 are enriched in acidic residues. The G-patch domain maps to Thr-312–Glu-358. The span at Val-478–Arg-495 shows a compositional bias: polar residues. Residues Val-478 to Phe-513 are disordered. Positions Ser-496–Phe-513 are enriched in basic and acidic residues.

Its subcellular location is the nucleus. Transcription repressor. This is Zinc finger CCCH-type with G patch domain-containing protein from Drosophila melanogaster (Fruit fly).